We begin with the raw amino-acid sequence, 758 residues long: G-protein alpha subunit activating protein gbas-1 (758 aa).

Over residues 30 to 48 (LDEVDNADFEREDDEEEVL) the composition is skewed to acidic residues. A disordered region spans residues 30–70 (LDEVDNADFEREDDEEEVLSEPSESPYTSTPKSSKRVNKTR). Over residues 49–61 (SEPSESPYTSTPK) the composition is skewed to low complexity. A GBA motif is present at residues 653-666 (ETVTVEEFLMNSYS). Residues 668 to 690 (AAPSTSTAPAPPKAPVTAPPAPQ) form a disordered region. A compositionally biased stretch (pro residues) spans 676-689 (PAPPKAPVTAPPAP).

As to quaternary structure, interacts (via GBA motif) with guanine nucleotide-binding protein G(o) subunit alpha goa-1 (in GDP-bound form); the interaction leads to activation of goa-1. As to expression, expressed in some neurons including the head and tail neurons, HSN and VC, in a subset of glial cells, in the distal tips cells and in the intestine.

Acts as a non-receptor guanine nucleotide exchange factor which binds to and activates G-protein alpha subunit goa-1. The protein is G-protein alpha subunit activating protein gbas-1 of Caenorhabditis elegans.